Consider the following 459-residue polypeptide: MRTIIRQLLSQGVSGQTYAIAGWVRSLRISKGIAFIALNDGSNLAGIQVVVEEQSPAFSEIDAIATGCSLRVTGTLVASPAAGQERELRAESIAIVGTSDENYPLQKKRHSFEYLREIAHLRPRSNTFGAVFRLRSRLAQAIHRFFGDNNFLYVHTPIITASDCEGAGELFRVTTLDAASPPLLEGRPDFGQDFFGQKTGLTVSGQLEGELFALAFSDIYTFGPTFRAENSNTPRHAAEFWMIEPEMAFADLADDAALAEKFVRYLCRFALEECAEEMAFFDRQIEKGLLERVRRVAEADFVRMEYDEAIQRLQRSGVTFSYPVEWGLDLQTEHERYITEKIVGGPAFILNYPRDIKAFYMRSNPDNRTVAAMDLLVPKVGEIIGGSQREERLDVLEARMAELGIAREPLWWYLESRRWGSCPHAGFGLGFERLVMYLSGMENIRDVIPFPRTPRHAEF.

The protein belongs to the class-II aminoacyl-tRNA synthetase family. In terms of assembly, homodimer.

The protein resides in the cytoplasm. It carries out the reaction tRNA(Asn) + L-asparagine + ATP = L-asparaginyl-tRNA(Asn) + AMP + diphosphate + H(+). This is Asparagine--tRNA ligase from Pelobacter propionicus (strain DSM 2379 / NBRC 103807 / OttBd1).